Reading from the N-terminus, the 384-residue chain is Spermidine/putrescine import ATP-binding protein PotA (384 aa).

The 233-residue stretch at 6-238 (ITFNNVSKTF…PINHFVANFI (233 aa)) folds into the ABC transporter domain. 40–47 (GASGSGKS) is an ATP binding site.

This sequence belongs to the ABC transporter superfamily. Spermidine/putrescine importer (TC 3.A.1.11.1) family. In terms of assembly, the complex is composed of two ATP-binding proteins (PotA), two transmembrane proteins (PotB and PotC) and a solute-binding protein (PotD).

It localises to the cell membrane. It catalyses the reaction ATP + H2O + polyamine-[polyamine-binding protein]Side 1 = ADP + phosphate + polyamineSide 2 + [polyamine-binding protein]Side 1.. Functionally, part of the ABC transporter complex PotABCD involved in spermidine/putrescine import. Responsible for energy coupling to the transport system. The polypeptide is Spermidine/putrescine import ATP-binding protein PotA (Streptococcus pyogenes serotype M18 (strain MGAS8232)).